Here is a 309-residue protein sequence, read N- to C-terminus: Tagatose-6-phosphate kinase (309 aa).

It belongs to the carbohydrate kinase PfkB family. LacC subfamily.

It carries out the reaction D-tagatofuranose 6-phosphate + ATP = D-tagatofuranose 1,6-bisphosphate + ADP + H(+). It participates in carbohydrate metabolism; D-tagatose 6-phosphate degradation; D-glyceraldehyde 3-phosphate and glycerone phosphate from D-tagatose 6-phosphate: step 1/2. The chain is Tagatose-6-phosphate kinase from Streptococcus pneumoniae (strain 70585).